The primary structure comprises 101 residues: Small ribosomal subunit protein bS6 (101 aa).

Belongs to the bacterial ribosomal protein bS6 family. Part of the 30S ribosomal subunit. Forms a tight heterodimer with protein bS18.

Located on the outer edge of the platform on the body of the 30S subunit. This Thermus thermophilus (strain ATCC BAA-163 / DSM 7039 / HB27) protein is Small ribosomal subunit protein bS6 (rpsF).